The sequence spans 166 residues: Apoptosis regulator M11L (166 aa).

A helical transmembrane segment spans residues 138–160; it reads SGGCKISVYLTAAVVGFVAYGIL.

As to quaternary structure, interacts with host BAX; this interaction inhibits apoptosis activation. Interacts with host BAK1.

It is found in the host mitochondrion. Its subcellular location is the host membrane. Functionally, plays a role in the inhibition of mitochondria-mediated apoptosis by blocking the activation of mitochondria-tranlocalized BAX thereby maintaining pro-apoptotic BAX in an inactive conformation. Also inhibits apoptosis in a BAX-independent manner by interacting with and inhibiting host BAK1. This chain is Apoptosis regulator M11L (m011L), found in Myxoma virus (strain Lausanne) (MYXV).